Reading from the N-terminus, the 1310-residue chain is Contactin-associated protein-like 4 (1310 aa).

Positions 1–27 (MNMGSVAGAVLKMLLLLSTQNWNRVEA) are cleaved as a signal peptide. Residues 28 to 1243 (GNSYDCDEPL…LTHAIKSDSA (1216 aa)) lie on the Extracellular side of the membrane. Residues 33–179 (CDEPLVSALP…IGMRIEVFGC (147 aa)) form the F5/8 type C domain. Cys-33 and Cys-179 are disulfide-bonded. In terms of domain architecture, Laminin G-like 1 spans 214-346 (FKTMESDGIL…NLFYNGVDVI (133 aa)). N-linked (GlcNAc...) asparagine glycosylation is found at Asn-262, Asn-287, and Asn-361. Intrachain disulfides connect Cys-334–Cys-366, Cys-517–Cys-549, Cys-555–Cys-566, and Cys-560–Cys-575. The Laminin G-like 2 domain occupies 400–529 (FRTWNKAGLL…LISINNKMVD (130 aa)). A glycan (N-linked (GlcNAc...) asparagine) is linked at Asn-540. An EGF-like 1 domain is found at 551–588 (ISDRCLPNSCEHGGECSQSWSTFHCNCTNTGYTGATCH). Asn-576 carries N-linked (GlcNAc...) asparagine glycosylation. A disulfide bond links Cys-577 and Cys-587. In terms of domain architecture, Fibrinogen C-terminal spans 589-794 (SSVYEQSCEA…LLCRGDRPFW (206 aa)). N-linked (GlcNAc...) asparagine glycans are attached at residues Asn-604, Asn-627, Asn-639, Asn-708, and Asn-750. Positions 795 to 960 (NAASFNTEAS…TVTPGVQPGC (166 aa)) constitute a Laminin G-like 3 domain. Cystine bridges form between Cys-933–Cys-960, Cys-964–Cys-977, Cys-971–Cys-986, and Cys-988–Cys-998. An EGF-like 2 domain is found at 960–999 (CRGHCGSYGKLCRHGGKCREKPSGFFCDCSSSAYAGPFCS). N-linked (GlcNAc...) asparagine glycosylation is found at Asn-1019, Asn-1025, and Asn-1075. One can recognise a Laminin G-like 4 domain in the interval 1048 to 1204 (FRTTRAPSLL…VTGHVTESSC (157 aa)). Cys-1169 and Cys-1204 are disulfide-bonded. A helical membrane pass occupies residues 1244–1264 (VIGGLIAVVIFILLCVSAIAV). The Cytoplasmic segment spans residues 1265–1310 (RIYQQKRLYKRNEAKRSENVDSAEAVLKSELHIQNAVGENQKEYFF).

The protein belongs to the neurexin family. As to quaternary structure, interacts with TIAM1. Specifically present in developing cortical interneurons: highly expressed in cortical parvalbumin (PV) cells and midbrain dopaminergic neurons and is localized presynaptically (at protein level). Also present in the substantia nigra pars compacta (SnC) and ventral tegmental area (VTA) midbrain dopaminergic projection populations.

The protein resides in the presynaptic cell membrane. Its function is as follows. Presynaptic protein involved in both dopaminergic synaptic transmission and GABAergic system, thereby participating in the structural maturation of inhibitory interneuron synapses. Involved in the dopaminergic synaptic transmission by attenuating dopamine release through a presynaptic mechanism. Also participates in the GABAergic system. This chain is Contactin-associated protein-like 4 (Cntnap4), found in Mus musculus (Mouse).